The primary structure comprises 152 residues: 6,7-dimethyl-8-ribityllumazine synthase (152 aa).

Residues Phe21, 55–57 (AFE), and 79–81 (AVI) contribute to the 5-amino-6-(D-ribitylamino)uracil site. 84 to 85 (AT) is a (2S)-2-hydroxy-3-oxobutyl phosphate binding site. His87 acts as the Proton donor in catalysis. Phe112 is a 5-amino-6-(D-ribitylamino)uracil binding site. Arg126 lines the (2S)-2-hydroxy-3-oxobutyl phosphate pocket.

It belongs to the DMRL synthase family. Forms an icosahedral capsid composed of 60 subunits, arranged as a dodecamer of pentamers.

The catalysed reaction is (2S)-2-hydroxy-3-oxobutyl phosphate + 5-amino-6-(D-ribitylamino)uracil = 6,7-dimethyl-8-(1-D-ribityl)lumazine + phosphate + 2 H2O + H(+). The protein operates within cofactor biosynthesis; riboflavin biosynthesis; riboflavin from 2-hydroxy-3-oxobutyl phosphate and 5-amino-6-(D-ribitylamino)uracil: step 1/2. In terms of biological role, catalyzes the formation of 6,7-dimethyl-8-ribityllumazine by condensation of 5-amino-6-(D-ribitylamino)uracil with 3,4-dihydroxy-2-butanone 4-phosphate. This is the penultimate step in the biosynthesis of riboflavin. This Exiguobacterium sibiricum (strain DSM 17290 / CCUG 55495 / CIP 109462 / JCM 13490 / 255-15) protein is 6,7-dimethyl-8-ribityllumazine synthase.